A 58-amino-acid chain; its full sequence is Small ribosomal subunit protein bS21B (58 aa).

It belongs to the bacterial ribosomal protein bS21 family.

This is Small ribosomal subunit protein bS21B (rpsU2) from Nostoc sp. (strain PCC 7120 / SAG 25.82 / UTEX 2576).